Reading from the N-terminus, the 162-residue chain is NADH-quinone oxidoreductase subunit I (162 aa).

4Fe-4S ferredoxin-type domains lie at 54–83 (RRYENGEERCIACKLCEAVCPALAITIESE) and 93–122 (TRYDIDLTKCIFCGFCEESCPVDSIVETHI). [4Fe-4S] cluster contacts are provided by Cys-63, Cys-66, Cys-69, Cys-73, Cys-102, Cys-105, Cys-108, and Cys-112.

This sequence belongs to the complex I 23 kDa subunit family. NDH-1 is composed of 14 different subunits. Subunits NuoA, H, J, K, L, M, N constitute the membrane sector of the complex. Requires [4Fe-4S] cluster as cofactor.

The protein resides in the cell inner membrane. The enzyme catalyses a quinone + NADH + 5 H(+)(in) = a quinol + NAD(+) + 4 H(+)(out). In terms of biological role, NDH-1 shuttles electrons from NADH, via FMN and iron-sulfur (Fe-S) centers, to quinones in the respiratory chain. The immediate electron acceptor for the enzyme in this species is believed to be ubiquinone. Couples the redox reaction to proton translocation (for every two electrons transferred, four hydrogen ions are translocated across the cytoplasmic membrane), and thus conserves the redox energy in a proton gradient. This is NADH-quinone oxidoreductase subunit I from Paraburkholderia xenovorans (strain LB400).